We begin with the raw amino-acid sequence, 144 residues long: Small ribosomal subunit protein bS16 (144 aa).

The disordered stretch occupies residues Asn-115–Glu-144.

It belongs to the bacterial ribosomal protein bS16 family.

This is Small ribosomal subunit protein bS16 from Nocardia farcinica (strain IFM 10152).